The sequence spans 247 residues: Cell division protein ZapD (247 aa).

The protein belongs to the ZapD family. In terms of assembly, interacts with FtsZ.

It is found in the cytoplasm. Cell division factor that enhances FtsZ-ring assembly. Directly interacts with FtsZ and promotes bundling of FtsZ protofilaments, with a reduction in FtsZ GTPase activity. This chain is Cell division protein ZapD, found in Shigella sonnei (strain Ss046).